We begin with the raw amino-acid sequence, 502 residues long: mRNA cap guanine-N(7) methyltransferase (502 aa).

Residues 1 to 118 are disordered; it reads MADENPQAQG…SQQEEAMRFS (118 aa). Residues 93-115 are compositionally biased toward basic and acidic residues; it reads LVDRETLRRRQEERERSQQEEAM. In terms of domain architecture, mRNA cap 0 methyltransferase spans 146-502; that stretch reads SKIKGLRSFN…FYHAFCFYKV (357 aa). 155–156 is a binding site for mRNA; it reads NN. S-adenosyl-L-methionine-binding positions include Lys159, Gly202, Asp226, Asp264, 307-309, and Tyr312; that span reads MFT. A compositionally biased stretch (basic and acidic residues) spans 360–369; the sequence is ERETAAKKEE. A disordered region spans residues 360-381; it reads ERETAAKKEEAEPEDGEVEEDD. Residues 370-381 are compositionally biased toward acidic residues; sequence AEPEDGEVEEDD.

This sequence belongs to the class I-like SAM-binding methyltransferase superfamily. mRNA cap 0 methyltransferase family.

It is found in the nucleus. It carries out the reaction a 5'-end (5'-triphosphoguanosine)-ribonucleoside in mRNA + S-adenosyl-L-methionine = a 5'-end (N(7)-methyl 5'-triphosphoguanosine)-ribonucleoside in mRNA + S-adenosyl-L-homocysteine. Its function is as follows. Responsible for methylating the 5'-cap structure of mRNAs. The sequence is that of mRNA cap guanine-N(7) methyltransferase (abd1) from Aspergillus oryzae (strain ATCC 42149 / RIB 40) (Yellow koji mold).